The chain runs to 309 residues: MKIVFMGTPDFAVPSLKSLINEFGVEAVFTQPDRPKGRGKKLGMSPVKEVALEHNIPVYQPLRLKNEPETIEELKNMEPDFIIVVAFGQILPKEVLDIPKYGCINLHASLLPKFRGAAPLNWSIIKGEKVTGNTTMLMDVGLDTGDMLLKDEVEITDNMTAGELHDILMERGGELLVRTIKGILNNEITPEKQNEEETCYAPMLNKEIAKIDWSLSAQDIHNLVRGLNPWPVALTSYDDITMKVHQTRVEKGESNKEPGTIIAVDKTGIKVSTGKDILVIEKLQFPNSKQLFVEQFINGNTIEVGKVLK.

109–112 (SLLP) serves as a coordination point for (6S)-5,6,7,8-tetrahydrofolate.

This sequence belongs to the Fmt family.

The catalysed reaction is L-methionyl-tRNA(fMet) + (6R)-10-formyltetrahydrofolate = N-formyl-L-methionyl-tRNA(fMet) + (6S)-5,6,7,8-tetrahydrofolate + H(+). Functionally, attaches a formyl group to the free amino group of methionyl-tRNA(fMet). The formyl group appears to play a dual role in the initiator identity of N-formylmethionyl-tRNA by promoting its recognition by IF2 and preventing the misappropriation of this tRNA by the elongation apparatus. The protein is Methionyl-tRNA formyltransferase of Clostridium perfringens (strain SM101 / Type A).